Consider the following 416-residue polypeptide: 3-isopropylmalate dehydratase large subunit (416 aa).

Residues Cys299, Cys357, and Cys360 each contribute to the [4Fe-4S] cluster site.

This sequence belongs to the aconitase/IPM isomerase family. LeuC type 2 subfamily. As to quaternary structure, heterodimer of LeuC and LeuD. Requires [4Fe-4S] cluster as cofactor.

The enzyme catalyses (2R,3S)-3-isopropylmalate = (2S)-2-isopropylmalate. The protein operates within amino-acid biosynthesis; L-leucine biosynthesis; L-leucine from 3-methyl-2-oxobutanoate: step 2/4. Catalyzes the isomerization between 2-isopropylmalate and 3-isopropylmalate, via the formation of 2-isopropylmaleate. The polypeptide is 3-isopropylmalate dehydratase large subunit (Saccharolobus solfataricus (strain ATCC 35092 / DSM 1617 / JCM 11322 / P2) (Sulfolobus solfataricus)).